The sequence spans 2549 residues: Serine/threonine-protein kinase mTOR (2549 aa).

The residue at position 1 (Met1) is an N-acetylmethionine. Residues 1–651 (MLGTGPATAT…HVVSQTAVQV (651 aa)) are interaction with NBN. HEAT repeat units lie at residues 16–53 (SSNVSVLQQFASGLKSRNEETRAKAAKELQHYVTMELR), 55–99 (MSQE…VEGG), 100–137 (NSTRIGRFANYLRNLLPSSDPVVMEMASKAIGRLAMAG), 138–179 (DTFT…AISV), 180–220 (PTFF…LILT), 222–276 (QREP…RISS), 277–313 (MEGERLREEMEEITQQQLVHDKYCKDLMGFGTKPRHI), 314–364 (TPFT…CCRD), 365–409 (LMEE…AFTD), 410–445 (TQYLQDTMNHVLSCVKKEKERTAAFQALGLLSVAVR), 446–494 (SEFK…RAMG), 495–529 (PGIQQDIKELLEPMLAVGLSPALTAVLYDLSRQIP), 530–563 (QLKKDIQDGLLKMLSLVLMHKPLRHPGMPKGLAH), 564–596 (QLASPGLTTLPEASDVASITLALRTLGSFEFEG), 597–636 (HSLTQFVRHCADHFLNSEHKEIRMEAARTCSRLLTPSIHL), 637–683 (ISGH…DERF), 686–724 (HLAQAENLQALFVALNDQVFEIRELAICTVGRLSSMNPA), 727–766 (MPFLRKMLIQILTELEHSGIGRIKEQSARMLGHLVSNAPR), 769–811 (RPYM…VSGL), 814–853 (RKWVDELFVIIMDMLQDSSLLAKRQVALWTLGQLVASTGY), 857–893 (PYRKYPTLLEVLLNFLKTEQNQGTRREAIRVLGLLGA), 894–942 (LDPY…GNLP), 943–988 (LDEF…KCVQ), 989–1027 (FLPQVMPTFLNVIRVCDGAIREFLFQQLGMLVSFVKSHI), 1029–1068 (PYMDEIVTLMREFWVMNTSIQSTIILLIEQIVVALGGEFK), 1069–1105 (LYLPQLIPHMLRVFMHDNSQGRIVSIKLLAAIQLFGA), 1106–1144 (NLDDYLHLLLPPIVKLFDAPEVPLPSRKAALETVDRLTE), 1145–1188 (SLDF…GKKY), 1189–1225 (QIFIPMVNKVLVRHRINHQRYDVLICRIVKGYTLADE), 1226–1273 (EEDP…GAAR), 1274–1311 (RVSKDDWLEWLRRLSLELLKDSSSPSLRSCWALAQAYN), and 1312–1345 (PMARDLFNAAFVSCWSELNEDQQDELIRSIELAL). A Phosphoserine modification is found at Ser567. Position 1162 is a phosphothreonine (Thr1162). Lys1218 carries the post-translational modification N6-acetyllysine. A Phosphoserine modification is found at Ser1261. 16 TPR repeats span residues 1346-1382 (TSQDIAEVTQTLLNLAEFMEHSDKGPLPLRDDNGIVL), 1383-1408 (LGERAAKCRAYAKALHYKELEFQKGP), 1409-1442 (TPAILESLISINNKLQQPEAASGVLEYAMKHFGE), 1443-1473 (LEIQATWYEKLHEWEDALVAYDKKMDTNKDD), 1474-1507 (PELMLGRMRCLEALGEWGQLHQQCCEKWTLVNDE), 1508-1541 (TQAKMARMAAAAAWGLGQWDSMEEYTCMIPRDTH), 1542-1574 (DGAFYRAVLALHQDLFSLAQQCIDKARDLLDAE), 1575-1614 (LTAMAGESYSRAYGAMVSCHMLSELEEVIQYKLVPERREI), 1615-1649 (IRQIWWERLQGCQRIVEDWQKILMVRSLVVSPHED), 1650-1693 (MRTW…PTVH), 1694-1731 (PQVTYAYMKNMWKSARKIDAFQHMQHFVQTMQQQAQHA), 1732-1786 (IATE…DRSW), 1787-1846 (YKAW…STEG), 1898-1930 (NNLQDTLRVLTLWFDYGHWPDVNEALVEGVKAI), 1931-1970 (QIDTWLQVIPQLIARIDTPRPLVGRLIHQLLTDIGRYHPQ), and 1971-2005 (ALIYPLTVASKSTTTARHNAANKILKNMCEHSNTL). Residues 1382 to 1982 (LLGERAAKCR…IYPLTVASKS (601 aa)) form the FAT domain. 3 residues coordinate 1D-myo-inositol hexakisphosphate: Lys1662, Lys1702, and Arg1749. The segment at 1812–1867 (DEKKKLRHASGANITNATTTATTAASAAAATSTEGSNSESEAESNESSPTPSPLQK) is disordered. A compositionally biased stretch (low complexity) spans 1826–1860 (TNATTTATTAASAAAATSTEGSNSESEAESNESSP). Residues 2012–2144 (VSEELIRVAI…DLELAVPGTY (133 aa)) are sufficient for interaction with the FKBP1A/rapamycin complex. A Glycyl lysine isopeptide (Lys-Gly) (interchain with G-Cter in ubiquitin) cross-link involves residue Lys2066. Positions 2156 to 2469 (IAPSLQVITS…GVELGEPAHK (314 aa)) constitute a PI3K/PI4K catalytic domain. At Ser2159 the chain carries Phosphoserine. A G-loop region spans residues 2162–2168 (VITSKQR). Position 2164 is a phosphothreonine (Thr2164). Ser2165 and Gln2167 together coordinate ATP. Thr2173 carries the post-translational modification Phosphothreonine; by PKB/AKT1. ATP is bound by residues Leu2185, Lys2187, Glu2190, Tyr2225, Gly2238, Trp2239, Val2240, and Thr2245. Residues 2258 to 2296 (KILLNIEHRIMLRMAPDYDHLTLMQKVEVFEHAVNNTAG) are interaction with MLST8. Residues 2335-2343 (GLGDRHPSN) are catalytic loop. Asn2343 lines the Mg(2+) pocket. The ATP site is built by Met2345 and Ile2356. The interval 2355-2380 (HIDFGDCFEVAMTREKFPEKIPFRLT) is activation loop. Mg(2+) is bound at residue Asp2357. At Thr2446 the chain carries Phosphothreonine; by RPS6KB1. Residue Ser2448 is modified to Phosphoserine; by RPS6KB1. At Ser2478 the chain carries Phosphoserine. Position 2481 is a phosphoserine; by autocatalysis (Ser2481). In terms of domain architecture, FATC spans 2517–2549 (DTLDVPTQVELLIKQATSHENLCQCYIGWCPFW).

Belongs to the PI3/PI4-kinase family. As to quaternary structure, part of the mechanistic target of rapamycin complex 1 (mTORC1) which contains MTOR, MLST8 and RPTOR. The mTORC1 complex is a 1 Md obligate dimer of two stoichiometric heterotetramers with overall dimensions of 290 A x 210 A x 135 A. It has a rhomboid shape and a central cavity, the dimeric interfaces are formed by interlocking interactions between the two MTOR and the two RPTOR subunits. The MLST8 subunit forms distal foot-like protuberances, and contacts only one MTOR within the complex, while the small AKT1S1/PRAS40 localizes to the midsection of the central core, in close proximity to RPTOR. mTORC1 associates with AKT1S1/PRAS40, which inhibits its activity by blocking MTOR substrate-recruitment site. Component of the mechanistic target of rapamycin complex 2 (mTORC2), consisting in two heterotretramers composed of MTOR, MLST8, RICTOR and MAPKAP1/SIN1. Interacts with PLPP7 and PML. Interacts with PRR5 and RICTOR; the interaction is direct within the mTORC2 complex and interaction with RICTOR is enhanced by deubiquitination of RICTOR by USP9X. mTORC1 and mTORC2 associate with DEPTOR, which regulates their activity. Interacts with WAC; WAC positively regulates MTOR activity by promoting the assembly of the TTT complex composed of TELO2, TTI1 and TTI2 and the RUVBL complex composed of RUVBL1 and RUVBL2 into the TTT-RUVBL complex which leads to the dimerization of the mTORC1 complex and its subsequent activation. Interacts with UBQLN1. Interacts with TTI1 and TELO2. Interacts with CLIP1; phosphorylates and regulates CLIP1. Interacts with NBN. Interacts with HTR6. Interacts with BRAT1. Interacts with MEAK7 (via C-terminal domain); the interaction increases upon nutrient stimulation. Interacts with TM4SF5; the interaction is positively regulated by arginine and is negatively regulated by leucine. Interacts with GPR137B. Interacts with NCKAP1L. Interacts with TPCN1 and TPCN2; the interaction is required for TPCN1 and TPCN2 sensitivity to ATP. Interacts with ATP6V1A and with CRYAB, forming a ternary complex. Interacts with SLC38A7; this interaction mediates the recruitment of mTORC1 to the lysosome and its subsequent activation. Interacts with TSPAN8. Post-translationally, autophosphorylates when part of mTORC1 or mTORC2. Phosphorylation at Ser-1261, Ser-2159 and Thr-2164 promotes autophosphorylation. Phosphorylated at Ser-2448 by RPS6KB1. Phosphorylation in the kinase domain modulates the interactions of MTOR with RPTOR and AKT1S1/PRAS40 and leads to increased intrinsic mTORC1 kinase activity. Phosphorylation at Ser-2159 by TBK1 in response to growth factors and pathogen recognition receptors promotes mTORC1 activity. Phosphorylation at Ser-2159 by TBK1 in response to EGF growth factor promotes mTORC2 activity, leading to AKT1 phosphorylation and activation. Phosphorylation at Thr-2173 in the ATP-binding region by AKT1 strongly reduces kinase activity. In terms of processing, ubiquitinated at Lys-2066 by the SCF(FBXO22) complex via 'Lys-27'-linked ubiquitination prevents mTORC1 substrate recruitment.

Its subcellular location is the lysosome membrane. It is found in the endoplasmic reticulum membrane. The protein localises to the golgi apparatus membrane. The protein resides in the cell membrane. It localises to the mitochondrion outer membrane. Its subcellular location is the cytoplasm. It is found in the nucleus. The protein localises to the PML body. The protein resides in the microsome membrane. It localises to the cytoplasmic vesicle. Its subcellular location is the phagosome. It carries out the reaction L-seryl-[protein] + ATP = O-phospho-L-seryl-[protein] + ADP + H(+). The enzyme catalyses L-threonyl-[protein] + ATP = O-phospho-L-threonyl-[protein] + ADP + H(+). The catalysed reaction is L-tyrosyl-[protein] + ATP = O-phospho-L-tyrosyl-[protein] + ADP + H(+). The mTORC1 complex is activated in response to nutrients, growth factors or amino acids: activation requires relocalization of the mTORC1 complex to lysosomes that is mediated by the Ragulator complex, SLC38A9, and the Rag GTPases RagA/RRAGA, RagB/RRAGB, RagC/RRAGC and RagD/RRAGD. Activation of mTORC1 by growth factors such as insulin involves AKT1-mediated phosphorylation of TSC1-TSC2, which leads to the activation of the RHEB GTPase a potent activator of the protein kinase activity of mTORC1. Insulin-stimulated and amino acid-dependent phosphorylation at Ser-1261 promotes autophosphorylation and the activation of mTORC1. On the other hand, low cellular energy levels can inhibit mTORC1 through activation of PRKAA1 while hypoxia inhibits mTORC1 through a REDD1-dependent mechanism which may also require PRKAA1. The kinase activity of MTOR within the mTORC1 complex is positively regulated by MLST8. The kinase activity of MTOR is inhibited by DEPTOR and AKT1S1. The non-canonical mTORC1 complex is independent of the RHEB GTPase and specifically mediates phosphorylation of MiT/TFE factors TFEB and TFE3 but not other mTORC1 substrates: it is activated by FLCN, which activates Rag GTPases RagC/RRAGC and RagD/RRAGD. MTOR is the target of the immunosuppressive and anti-cancer drug rapamycin which acts in complex with FKBP1A/FKBP12, and specifically inhibits its kinase activity. mTORC2 is also activated by growth factors, but seems to be nutrient-insensitive. mTORC2 associates and is directly activated by ribosomes. mTORC2 may also be regulated by RHEB but in an indirect manner through the PI3K signaling pathway. Functionally, serine/threonine protein kinase which is a central regulator of cellular metabolism, growth and survival in response to hormones, growth factors, nutrients, energy and stress signals. MTOR directly or indirectly regulates the phosphorylation of at least 800 proteins. Functions as part of 2 structurally and functionally distinct signaling complexes mTORC1 and mTORC2 (mTOR complex 1 and 2). In response to nutrients, growth factors or amino acids, mTORC1 is recruited to the lysosome membrane and promotes protein, lipid and nucleotide synthesis by phosphorylating key regulators of mRNA translation and ribosome synthesis. This includes phosphorylation of EIF4EBP1 and release of its inhibition toward the elongation initiation factor 4E (eiF4E). Moreover, phosphorylates and activates RPS6KB1 and RPS6KB2 that promote protein synthesis by modulating the activity of their downstream targets including ribosomal protein S6, eukaryotic translation initiation factor EIF4B, and the inhibitor of translation initiation PDCD4. Stimulates the pyrimidine biosynthesis pathway, both by acute regulation through RPS6KB1-mediated phosphorylation of the biosynthetic enzyme CAD, and delayed regulation, through transcriptional enhancement of the pentose phosphate pathway which produces 5-phosphoribosyl-1-pyrophosphate (PRPP), an allosteric activator of CAD at a later step in synthesis, this function is dependent on the mTORC1 complex. Regulates ribosome synthesis by activating RNA polymerase III-dependent transcription through phosphorylation and inhibition of MAF1 an RNA polymerase III-repressor. Activates dormant ribosomes by mediating phosphorylation of SERBP1, leading to SERBP1 inactivation and reactivation of translation. In parallel to protein synthesis, also regulates lipid synthesis through SREBF1/SREBP1 and LPIN1. To maintain energy homeostasis mTORC1 may also regulate mitochondrial biogenesis through regulation of PPARGC1A. In the same time, mTORC1 inhibits catabolic pathways: negatively regulates autophagy through phosphorylation of ULK1. Under nutrient sufficiency, phosphorylates ULK1 at 'Ser-758', disrupting the interaction with AMPK and preventing activation of ULK1. Also prevents autophagy through phosphorylation of the autophagy inhibitor DAP. Also prevents autophagy by phosphorylating RUBCNL/Pacer under nutrient-rich conditions. Prevents autophagy by mediating phosphorylation of AMBRA1, thereby inhibiting AMBRA1 ability to mediate ubiquitination of ULK1 and interaction between AMBRA1 and PPP2CA. mTORC1 exerts a feedback control on upstream growth factor signaling that includes phosphorylation and activation of GRB10 a INSR-dependent signaling suppressor. Among other potential targets mTORC1 may phosphorylate CLIP1 and regulate microtubules. The mTORC1 complex is inhibited in response to starvation and amino acid depletion. The non-canonical mTORC1 complex, which acts independently of RHEB, specifically mediates phosphorylation of MiT/TFE factors TFEB and TFE3 in the presence of nutrients, promoting their cytosolic retention and inactivation. Upon starvation or lysosomal stress, inhibition of mTORC1 induces dephosphorylation and nuclear translocation of TFEB and TFE3, promoting their transcription factor activity. The mTORC1 complex regulates pyroptosis in macrophages by promoting GSDMD oligomerization. MTOR phosphorylates RPTOR which in turn inhibits mTORC1. As part of the mTORC2 complex, MTOR transduces signals from growth factors to pathways involved in proliferation, cytoskeletal organization, lipogenesis and anabolic output. In response to growth factors, mTORC2 phosphorylates and activates AGC protein kinase family members, including AKT (AKT1, AKT2 and AKT3), PKC (PRKCA, PRKCB and PRKCE) and SGK1. In contrast to mTORC1, mTORC2 is nutrient-insensitive. mTORC2 plays a critical role in AKT1 activation by mediating phosphorylation of different sites depending on the context, such as 'Thr-450', 'Ser-473', 'Ser-477' or 'Thr-479', facilitating the phosphorylation of the activation loop of AKT1 on 'Thr-308' by PDPK1/PDK1 which is a prerequisite for full activation. mTORC2 also regulates the phosphorylation of SGK1 at 'Ser-422'. mTORC2 may regulate the actin cytoskeleton, through phosphorylation of PRKCA, PXN and activation of the Rho-type guanine nucleotide exchange factors RHOA and RAC1A or RAC1B. The mTORC2 complex also phosphorylates various proteins involved in insulin signaling, such as FBXW8 and IGF2BP1. May also regulate insulin signaling by acting as a tyrosine protein kinase that catalyzes phosphorylation of IGF1R and INSR. Regulates osteoclastogenesis by adjusting the expression of CEBPB isoforms. Plays an important regulatory role in the circadian clock function; regulates period length and rhythm amplitude of the suprachiasmatic nucleus (SCN) and liver clocks. This Rattus norvegicus (Rat) protein is Serine/threonine-protein kinase mTOR.